The following is an 863-amino-acid chain: Ubiquitin carboxyl-terminal hydrolase 13 (863 aa).

Ser114 carries the phosphoserine; by AURKB modification. The residue at position 122 (Thr122) is a Phosphothreonine. The UBP-type; degenerate zinc finger occupies 187 to 295 (PVSKYANNLT…KHLAHFGIDM (109 aa)). 4 residues coordinate Zn(2+): Cys211, Cys214, Cys231, and His244. Lys311 is covalently cross-linked (Glycyl lysine isopeptide (Lys-Gly) (interchain with G-Cter in SUMO2)). The USP domain occupies 336–861 (TGLKNLGNSC…LGYMYFYRRI (526 aa)). Catalysis depends on Cys345, which acts as the Nucleophile. A Glycyl lysine isopeptide (Lys-Gly) (interchain with G-Cter in SUMO2) cross-link involves residue Lys405. 2 UBA domains span residues 652–693 (DIDE…IIVH) and 727–767 (QPPE…IFSH). His823 functions as the Proton acceptor in the catalytic mechanism.

Belongs to the peptidase C19 family. Interacts with UFD1. Interacts (via UBA domains) with SIAH2 (when ubiquitinated). Interacts with BAG6; the interaction is direct and may mediate UBL4A deubiquitination. Interacts (via UBA 2 domain) with AMFR; the interaction is direct. Interacts with UBL4A; may be indirect via BAG6. Interacts with NEDD4. Post-translationally, phosphorylated by AURKB at Ser-114; leading to stabilization of cell cycle proteins such as SKP2 and AURKB, but not MCL1. In terms of tissue distribution, highly expressed in ovary and testes.

It localises to the cytoplasm. It catalyses the reaction Thiol-dependent hydrolysis of ester, thioester, amide, peptide and isopeptide bonds formed by the C-terminal Gly of ubiquitin (a 76-residue protein attached to proteins as an intracellular targeting signal).. With respect to regulation, specifically inhibited by spautin-1 (specific and potent autophagy inhibitor-1), a derivative of MBCQ that binds to USP13 and inhibits deubiquitinase activity. Regulated by PIK3C3/VPS34-containing complexes. The weak deubiquitinase activity in vitro suggests the existence of some mechanism that activates the enzyme. In terms of biological role, deubiquitinase that mediates deubiquitination of target proteins such as BECN1, MITF, SKP2 and USP10 and is involved in various processes such as autophagy, endoplasmic reticulum-associated degradation (ERAD), cell cycle progression or DNA damage response. Component of a regulatory loop that controls autophagy and p53/TP53 levels: mediates deubiquitination of BECN1, a key regulator of autophagy, leading to stabilize the PIK3C3/VPS34-containing complexes. Alternatively, forms with NEDD4 a deubiquitination complex, which subsequently stabilizes VPS34 to promote autophagy. Also deubiquitinates USP10, an essential regulator of p53/TP53 stability. In turn, PIK3C3/VPS34-containing complexes regulate USP13 stability, suggesting the existence of a regulatory system by which PIK3C3/VPS34-containing complexes regulate p53/TP53 protein levels via USP10 and USP13. Recruited by nuclear UFD1 and mediates deubiquitination of SKP2, thereby regulating endoplasmic reticulum-associated degradation (ERAD). Also regulates ERAD through the deubiquitination of UBL4A a component of the BAG6/BAT3 complex. Mediates stabilization of SIAH2 independently of deubiquitinase activity: binds ubiquitinated SIAH2 and acts by impairing SIAH2 autoubiquitination. Regulates the cell cycle progression by stabilizing cell cycle proteins such as SKP2 and AURKB. In addition, plays an important role in maintaining genomic stability and in DNA replication checkpoint activation via regulation of RAP80 and TOPBP1. Deubiquitinates the multifunctional protein HMGB1 and subsequently drives its nucleocytoplasmic localization and its secretion. Positively regulates type I and type II interferon signalings by deubiquitinating STAT1 but negatively regulates antiviral response by deubiquitinating STING1. The protein is Ubiquitin carboxyl-terminal hydrolase 13 (USP13) of Homo sapiens (Human).